The primary structure comprises 236 residues: UPF0257 lipoprotein YnfC (236 aa).

The N-terminal stretch at 1–16 (MKYKLLPCLLAIFLTG) is a signal peptide. Residue cysteine 17 is the site of N-palmitoyl cysteine attachment. Cysteine 17 is lipidated: S-diacylglycerol cysteine.

Belongs to the UPF0257 family.

The protein localises to the cell membrane. The sequence is that of UPF0257 lipoprotein YnfC from Escherichia coli O17:K52:H18 (strain UMN026 / ExPEC).